A 352-amino-acid polypeptide reads, in one-letter code: MNDIQVAKESLDKIIKKARVHLYKPIQIAEILYQDRVNKNINLLDKETYRNISKKWRDVICIRFLGRVSTSSAKYQDDLFNDNAMPPKHLNILGEMNRKTNGGVESYIYKKFFERFNQMSSALEYSYSRTPDNFHLSEFLALFWLEPGLKRSIDKVYEIVVYALFSSLIEALGVKVKIDLDLSNIDLLKEFEDFTRQIISLDSENTSLELNAKINRVGVTNASDRGLDMWANFGMAIQIKHLSLTEELAENIVSSVSSDRIVIVCKESEEKLILSLLNQIGWRSKIQSIITEADLIKWYDKALRGKSAYLVGSKILEHIRNEINLEFPATDIVDFNHFFHEREYNKALDIEK.

The enzyme catalyses Endonucleolytic cleavage of DNA to give specific double-stranded fragments with terminal 5'-phosphates.. In terms of biological role, a P subtype restriction enzyme that recognizes the double-stranded sequence 5'-RGCGCY-3' and cleaves after C-5. This chain is Type II restriction enzyme HaeII (haeIIR), found in Haemophilus aegyptius.